A 141-amino-acid polypeptide reads, in one-letter code: Large ribosomal subunit protein uL11 (141 aa).

The protein belongs to the universal ribosomal protein uL11 family. As to quaternary structure, part of the ribosomal stalk of the 50S ribosomal subunit. Interacts with L10 and the large rRNA to form the base of the stalk. L10 forms an elongated spine to which L12 dimers bind in a sequential fashion forming a multimeric L10(L12)X complex. Post-translationally, one or more lysine residues are methylated.

In terms of biological role, forms part of the ribosomal stalk which helps the ribosome interact with GTP-bound translation factors. In Prochlorococcus marinus (strain MIT 9215), this protein is Large ribosomal subunit protein uL11.